A 556-amino-acid chain; its full sequence is Double-strand-break repair protein rad21-like protein 1 (556 aa).

The protein belongs to the rad21 family. As to quaternary structure, component of some meiotic cohesin complex composed of the SMC1 (SMC1A or SMC1B) and SMC3 heterodimer attached via their hinge domain, RAD21L which link them, and STAG3.

The protein localises to the nucleus. Its subcellular location is the chromosome. In terms of biological role, meiosis-specific component of some cohesin complex required during the initial steps of prophase I in male meiosis. Probably required during early meiosis in males for separation of sister chromatids and homologous chromosomes. Replaces RAD21 in premeiotic S phase (during early stages of prophase I), while RAD21 reappears in later stages of prophase I. Involved in synaptonemal complex assembly, synapsis initiation and crossover recombination between homologous chromosomes during prophase I. The chain is Double-strand-break repair protein rad21-like protein 1 (RAD21L1) from Homo sapiens (Human).